The chain runs to 213 residues: Orotate phosphoribosyltransferase (213 aa).

A 5-phospho-alpha-D-ribose 1-diphosphate-binding site is contributed by lysine 26. 34-35 (FF) serves as a coordination point for orotate. 5-phospho-alpha-D-ribose 1-diphosphate-binding positions include 72 to 73 (YK), arginine 99, lysine 100, lysine 103, histidine 105, and 124 to 132 (DDVITAGTA). Orotate-binding residues include threonine 128 and arginine 156.

Belongs to the purine/pyrimidine phosphoribosyltransferase family. PyrE subfamily. Homodimer. Mg(2+) serves as cofactor.

It catalyses the reaction orotidine 5'-phosphate + diphosphate = orotate + 5-phospho-alpha-D-ribose 1-diphosphate. Its pathway is pyrimidine metabolism; UMP biosynthesis via de novo pathway; UMP from orotate: step 1/2. Its function is as follows. Catalyzes the transfer of a ribosyl phosphate group from 5-phosphoribose 1-diphosphate to orotate, leading to the formation of orotidine monophosphate (OMP). In Erwinia tasmaniensis (strain DSM 17950 / CFBP 7177 / CIP 109463 / NCPPB 4357 / Et1/99), this protein is Orotate phosphoribosyltransferase.